The sequence spans 91 residues: Small ribosomal subunit protein bS16 (91 aa).

The protein belongs to the bacterial ribosomal protein bS16 family.

The protein is Small ribosomal subunit protein bS16 of Streptococcus mutans serotype c (strain ATCC 700610 / UA159).